Here is a 173-residue protein sequence, read N- to C-terminus: Ribosome maturation factor RimM (173 aa).

A PRC barrel domain is found at 97 to 170; sequence EHEYYYHEII…RIRVHIMEGL (74 aa).

It belongs to the RimM family. Binds ribosomal protein uS19.

The protein resides in the cytoplasm. Functionally, an accessory protein needed during the final step in the assembly of 30S ribosomal subunit, possibly for assembly of the head region. Essential for efficient processing of 16S rRNA. May be needed both before and after RbfA during the maturation of 16S rRNA. It has affinity for free ribosomal 30S subunits but not for 70S ribosomes. The polypeptide is Ribosome maturation factor RimM (Shouchella clausii (strain KSM-K16) (Alkalihalobacillus clausii)).